A 133-amino-acid polypeptide reads, in one-letter code: Cytochrome c-type biogenesis protein CcmE (133 aa).

The Cytoplasmic portion of the chain corresponds to Met-1–Arg-7. The chain crosses the membrane as a helical; Signal-anchor for type II membrane protein span at residues Leu-8 to Thr-28. Residues Leu-29–Pro-133 are Periplasmic-facing. His-120 and Tyr-124 together coordinate heme.

This sequence belongs to the CcmE/CycJ family.

The protein resides in the cell inner membrane. Functionally, heme chaperone required for the biogenesis of c-type cytochromes. Transiently binds heme delivered by CcmC and transfers the heme to apo-cytochromes in a process facilitated by CcmF and CcmH. The polypeptide is Cytochrome c-type biogenesis protein CcmE (Wolbachia sp. subsp. Drosophila simulans (strain wRi)).